The chain runs to 92 residues: RNA-binding protein Hfq (92 aa).

The Sm domain maps to 10 to 71 (DLFLNQLRKE…ISSIMPSKPI (62 aa)). The disordered stretch occupies residues 73-92 (YMAQAQNNQQASQQSNNNQG). Residues 75–92 (AQAQNNQQASQQSNNNQG) show a composition bias toward low complexity.

The protein belongs to the Hfq family. As to quaternary structure, homohexamer.

Its function is as follows. RNA chaperone that binds small regulatory RNA (sRNAs) and mRNAs to facilitate mRNA translational regulation in response to envelope stress, environmental stress and changes in metabolite concentrations. Also binds with high specificity to tRNAs. The chain is RNA-binding protein Hfq from Caldicellulosiruptor bescii (strain ATCC BAA-1888 / DSM 6725 / KCTC 15123 / Z-1320) (Anaerocellum thermophilum).